We begin with the raw amino-acid sequence, 236 residues long: 7-cyano-7-deazaguanine synthase (236 aa).

7-17 (CSGGLDSVSLA) serves as a coordination point for ATP. Zn(2+)-binding residues include Cys185, Cys193, Cys196, and Cys199.

It belongs to the QueC family. Requires Zn(2+) as cofactor.

The enzyme catalyses 7-carboxy-7-deazaguanine + NH4(+) + ATP = 7-cyano-7-deazaguanine + ADP + phosphate + H2O + H(+). Its pathway is purine metabolism; 7-cyano-7-deazaguanine biosynthesis. Its function is as follows. Catalyzes the ATP-dependent conversion of 7-carboxy-7-deazaguanine (CDG) to 7-cyano-7-deazaguanine (preQ(0)). This Sinorhizobium fredii (strain NBRC 101917 / NGR234) protein is 7-cyano-7-deazaguanine synthase.